Reading from the N-terminus, the 510-residue chain is Membrane-bound transcription factor site-2 protease (510 aa).

The Cytoplasmic segment spans residues 1-3 (MIP). A helical transmembrane segment spans residues 4 to 24 (VSLVVVVVGGWTAVYLADLVL). The Lumenal segment spans residues 25 to 74 (KSSVYFKHSYEDWLEKNGLSISPFHIRWQTSVFNRAFYSWGRRKARMLYQ). 2 helical membrane-spanning segments follow: residues 75–95 (WFNF…FLLG) and 96–107 (KTLMQTLAQMMA). Topologically, residues 108–135 (DSPSSSSSSSSSSSSSSSSSIHNEQVLQ) are lumenal. Residues 136–160 (VVVPGINLPVNQLTYFFAAVLISGV) form a helical membrane-spanning segment. Histidine 162 lines the Zn(2+) pocket. Glutamate 163 is an active-site residue. 3 helical membrane passes run 165-177 (GHGI…QVRF), 178-200 (NGFG…TTHL), and 220-242 (FVLA…PFYY). Zn(2+) is bound at residue histidine 166. At 243–437 (TGVGVLITEV…LPVIVETFVK (195 aa)) the chain is on the lumenal side. Asparagine 328 carries N-linked (GlcNAc...) asparagine glycosylation. 2 consecutive transmembrane segments (helical) span residues 438-455 (YLIS…VPCF) and 456-467 (ALDGQWILNSFL). Over 468 to 483 (DATLTSVIGDNDVKDL) the chain is Lumenal. A helical transmembrane segment spans residues 484–504 (IGFFILLGGSVLLAANVTLGL). Residues 505 to 510 (WMVTAR) are Cytoplasmic-facing.

The protein belongs to the peptidase M50A family. It depends on Zn(2+) as a cofactor.

Its subcellular location is the membrane. It is found in the cytoplasm. It localises to the golgi apparatus membrane. It carries out the reaction Cleaves several transcription factors that are type-2 transmembrane proteins within membrane-spanning domains. Known substrates include sterol regulatory element-binding protein (SREBP) -1, SREBP-2 and forms of the transcriptional activator ATF6. SREBP-2 is cleaved at the site 477-DRSRILL-|-CVLTFLCLSFNPLTSLLQWGGA-505. The residues Asn-Pro, 11 residues distal to the site of cleavage in the membrane-spanning domain, are important for cleavage by S2P endopeptidase. Replacement of either of these residues does not prevent cleavage, but there is no cleavage if both of these residues are replaced.. Zinc metalloprotease that mediates intramembrane proteolysis of proteins such as ATF6, ATF6B, SREBF1/SREBP1 and SREBF2/SREBP2. Catalyzes the second step in the proteolytic activation of the sterol regulatory element-binding proteins (SREBPs) SREBF1/SREBP1 and SREBF2/SREBP2: cleaves SREBPs within the first transmembrane segment, thereby releasing the N-terminal segment with a portion of the transmembrane segment attached. Mature N-terminal SREBP fragments shuttle to the nucleus and activate gene transcription. Also mediates the second step in the proteolytic activation of the cyclic AMP-dependent transcription factor ATF-6 (ATF6 and ATF6B). Involved in intramembrane proteolysis during bone formation. In astrocytes and osteoblasts, upon DNA damage and ER stress, mediates the second step of the regulated intramembrane proteolytic activation of the transcription factor CREB3L1, leading to the inhibition of cell-cycle progression. The protein is Membrane-bound transcription factor site-2 protease (MBTPS2) of Cricetulus griseus (Chinese hamster).